Consider the following 451-residue polypeptide: Probable D-serine dehydratase (451 aa).

An N6-(pyridoxal phosphate)lysine modification is found at lysine 119.

This sequence belongs to the serine/threonine dehydratase family. DsdA subfamily. It depends on pyridoxal 5'-phosphate as a cofactor.

It catalyses the reaction D-serine = pyruvate + NH4(+). The sequence is that of Probable D-serine dehydratase from Acidovorax ebreus (strain TPSY) (Diaphorobacter sp. (strain TPSY)).